Consider the following 344-residue polypeptide: Anthranilate phosphoribosyltransferase (344 aa).

5-phospho-alpha-D-ribose 1-diphosphate contacts are provided by residues Gly-81, 84-85, Ser-89, 91-94, 109-117, and Ala-121; these read GD, NIST, and KHGNRALSS. Position 81 (Gly-81) interacts with anthranilate. Ser-93 contributes to the Mg(2+) binding site. Position 112 (Asn-112) interacts with anthranilate. An anthranilate-binding site is contributed by Arg-167. Mg(2+) contacts are provided by Asp-226 and Glu-227.

This sequence belongs to the anthranilate phosphoribosyltransferase family. As to quaternary structure, homodimer. Mg(2+) is required as a cofactor.

The catalysed reaction is N-(5-phospho-beta-D-ribosyl)anthranilate + diphosphate = 5-phospho-alpha-D-ribose 1-diphosphate + anthranilate. Its pathway is amino-acid biosynthesis; L-tryptophan biosynthesis; L-tryptophan from chorismate: step 2/5. Functionally, catalyzes the transfer of the phosphoribosyl group of 5-phosphorylribose-1-pyrophosphate (PRPP) to anthranilate to yield N-(5'-phosphoribosyl)-anthranilate (PRA). The protein is Anthranilate phosphoribosyltransferase of Xanthobacter autotrophicus (strain ATCC BAA-1158 / Py2).